Here is a 146-residue protein sequence, read N- to C-terminus: Hemoglobin subunit beta (146 aa).

Residue Val-1 is modified to N-acetylvaline. Positions 2-146 (HLTGEEKAAV…VATALAHKYH (145 aa)) constitute a Globin domain. Thr-12 is subject to Phosphothreonine. Ser-44 is subject to Phosphoserine. Lys-59 is subject to N6-acetyllysine. A heme b-binding site is contributed by His-63. Lys-82 is modified (N6-acetyllysine). His-92 serves as a coordination point for heme b. Residue Cys-93 is modified to S-nitrosocysteine. An N6-acetyllysine modification is found at Lys-144.

The protein belongs to the globin family. In terms of assembly, heterotetramer of two alpha chains and two beta chains. In terms of tissue distribution, red blood cells.

Involved in oxygen transport from the lung to the various peripheral tissues. The sequence is that of Hemoglobin subunit beta (HBB) from Macroderma gigas (Australian ghost bat).